The sequence spans 1608 residues: Adenylate cyclase type 10 (1608 aa).

Guanylate cyclase domains lie at 42-179 (VLMF…RLAQ) and 293-418 (TIVF…ARMM). Mg(2+) is bound by residues aspartate 47 and isoleucine 48. 47-52 (DISGFT) lines the ATP pocket. Position 95 (lysine 95) interacts with hydrogencarbonate. A Mg(2+)-binding site is contributed by aspartate 99. Positions 99 and 144 each coordinate ATP. Residues valine 167, arginine 176, and methionine 337 each contribute to the hydrogencarbonate site. ATP is bound by residues valine 406 and 412–416 (NIAAR).

It belongs to the adenylyl cyclase class-4/guanylyl cyclase family. Mg(2+) is required as a cofactor. Requires Mn(2+) as cofactor. Cleavage may occur to generate the active 48 kDa form. In terms of tissue distribution, detected in testis (at protein level). Preferentially expressed in testis.

It localises to the cell membrane. It is found in the cytoplasm. The protein localises to the cytoskeleton. The protein resides in the perinuclear region. Its subcellular location is the nucleus. It localises to the cell projection. It is found in the cilium. The protein localises to the mitochondrion. It catalyses the reaction ATP = 3',5'-cyclic AMP + diphosphate. Its activity is regulated as follows. Activated by manganese or magnesium ions. In the presence of magnesium ions, the enzyme is activated by bicarbonate. Calcium mildly increases the enzyme activity, also in the presence of magnesium ions. Catalyzes the formation of the signaling molecule cAMP. May function as sensor that mediates responses to changes in cellular bicarbonate and CO(2) levels. Has a critical role in mammalian spermatogenesis by producing the cAMP which regulates cAMP-responsive nuclear factors indispensable for sperm maturation in the epididymis. Induces capacitation, the maturational process that sperm undergo prior to fertilization. Involved in ciliary beat regulation. This is Adenylate cyclase type 10 (Adcy10) from Rattus norvegicus (Rat).